The following is a 260-amino-acid chain: UPF0246 protein Bphyt_1375 (260 aa).

Belongs to the UPF0246 family.

The polypeptide is UPF0246 protein Bphyt_1375 (Paraburkholderia phytofirmans (strain DSM 17436 / LMG 22146 / PsJN) (Burkholderia phytofirmans)).